The sequence spans 155 residues: Endoribonuclease YbeY (155 aa).

H114, H118, and H124 together coordinate Zn(2+).

The protein belongs to the endoribonuclease YbeY family. Requires Zn(2+) as cofactor.

It is found in the cytoplasm. Its function is as follows. Single strand-specific metallo-endoribonuclease involved in late-stage 70S ribosome quality control and in maturation of the 3' terminus of the 16S rRNA. This is Endoribonuclease YbeY from Tolumonas auensis (strain DSM 9187 / NBRC 110442 / TA 4).